We begin with the raw amino-acid sequence, 425 residues long: Phosphomethylpyrimidine synthase (425 aa).

Substrate is bound by residues methionine 94, tyrosine 123, histidine 162, serine 184 to glycine 186, asparagine 225 to arginine 228, and glutamate 264. Histidine 268 provides a ligand contact to Zn(2+). Tyrosine 291 contacts substrate. Position 332 (histidine 332) interacts with Zn(2+). Residues cysteine 407, cysteine 410, and cysteine 414 each coordinate [4Fe-4S] cluster.

The protein belongs to the ThiC family. [4Fe-4S] cluster serves as cofactor.

It catalyses the reaction 5-amino-1-(5-phospho-beta-D-ribosyl)imidazole + S-adenosyl-L-methionine = 4-amino-2-methyl-5-(phosphooxymethyl)pyrimidine + CO + 5'-deoxyadenosine + formate + L-methionine + 3 H(+). The protein operates within cofactor biosynthesis; thiamine diphosphate biosynthesis. Functionally, catalyzes the synthesis of the hydroxymethylpyrimidine phosphate (HMP-P) moiety of thiamine from aminoimidazole ribotide (AIR) in a radical S-adenosyl-L-methionine (SAM)-dependent reaction. This is Phosphomethylpyrimidine synthase from Methanoregula boonei (strain DSM 21154 / JCM 14090 / 6A8).